A 201-amino-acid chain; its full sequence is 3-isopropylmalate dehydratase small subunit (201 aa).

This sequence belongs to the LeuD family. LeuD type 1 subfamily. In terms of assembly, heterodimer of LeuC and LeuD.

It catalyses the reaction (2R,3S)-3-isopropylmalate = (2S)-2-isopropylmalate. The protein operates within amino-acid biosynthesis; L-leucine biosynthesis; L-leucine from 3-methyl-2-oxobutanoate: step 2/4. Functionally, catalyzes the isomerization between 2-isopropylmalate and 3-isopropylmalate, via the formation of 2-isopropylmaleate. The protein is 3-isopropylmalate dehydratase small subunit of Nitrobacter hamburgensis (strain DSM 10229 / NCIMB 13809 / X14).